Reading from the N-terminus, the 327-residue chain is tRNA uridine(34) hydroxylase (327 aa).

The 97-residue stretch at 122 to 218 (QENRCLVLDV…YGLKMGTGKW (97 aa)) folds into the Rhodanese domain. The active-site Cysteine persulfide intermediate is the C178.

It belongs to the TrhO family.

It catalyses the reaction uridine(34) in tRNA + AH2 + O2 = 5-hydroxyuridine(34) in tRNA + A + H2O. Catalyzes oxygen-dependent 5-hydroxyuridine (ho5U) modification at position 34 in tRNAs. The sequence is that of tRNA uridine(34) hydroxylase from Chlamydia trachomatis serovar A (strain ATCC VR-571B / DSM 19440 / HAR-13).